The following is a 65-amino-acid chain: Large ribosomal subunit protein bL33c (65 aa).

The protein belongs to the bacterial ribosomal protein bL33 family.

It is found in the plastid. Its subcellular location is the chloroplast. This Psilotum nudum (Whisk fern) protein is Large ribosomal subunit protein bL33c.